Consider the following 692-residue polypeptide: Serine/threonine-protein phosphatase PP-Z1 (692 aa).

2 disordered regions span residues 1-309 (MGNS…DIEN) and 321-357 (ENVN…PKKF). G2 is lipidated: N-myristoyl glycine. Composition is skewed to low complexity over residues 32 to 41 (SHSVKSAKSN), 49 to 69 (SLPS…STPS), and 91 to 122 (SSSH…RRSS). S49 is modified (phosphoserine). Acidic residues predominate over residues 170 to 179 (LTDDDNDDKD). T171 is modified (phosphothreonine). A compositionally biased stretch (low complexity) spans 190–204 (RSSNSRPSSIRSGSV). Residues 207-216 (RKSDVTHEEP) are compositionally biased toward basic and acidic residues. 2 positions are modified to phosphoserine: S209 and S222. Polar residues-rich tracts occupy residues 217-229 (NNGS…QENY) and 251-267 (FGSD…NSPG). T261 carries the phosphothreonine modification. Phosphoserine is present on S265. The span at 280 to 289 (TSNSTSSLNH) shows a compositional bias: low complexity. Residues 291 to 303 (SSRDIYPSKHISN) show a composition bias toward basic and acidic residues. The span at 321 to 331 (ENVNDKNNNIT) shows a compositional bias: polar residues. Residues D419, H421, D447, and N479 each contribute to the Mn(2+) site. Residue H480 is the Proton donor of the active site. Residues H528 and H603 each coordinate Mn(2+). Residues 672 to 692 (LANQQQQMMETSITNDNESQQ) form a disordered region. Polar residues predominate over residues 673-692 (ANQQQQMMETSITNDNESQQ). S690 carries the post-translational modification Phosphoserine.

Belongs to the PPP phosphatase family. PP-Z subfamily. In terms of assembly, interacts with SIS2 and VHS3, which regulate its activity. Requires Mn(2+) as cofactor.

The enzyme catalyses O-phospho-L-seryl-[protein] + H2O = L-seryl-[protein] + phosphate. The catalysed reaction is O-phospho-L-threonyl-[protein] + H2O = L-threonyl-[protein] + phosphate. Inhibited by the regulatory subunits VHS3 and SIS2. Functionally, essential for the maintenance of cell size and integrity in response to osmotic stress. This is Serine/threonine-protein phosphatase PP-Z1 (PPZ1) from Saccharomyces cerevisiae (strain ATCC 204508 / S288c) (Baker's yeast).